The following is a 479-amino-acid chain: Ribulose bisphosphate carboxylase large chain (479 aa).

Positions 1–2 (MS) are excised as a propeptide. Residues Asn-123 and Thr-173 each coordinate substrate. Lys-175 functions as the Proton acceptor in the catalytic mechanism. Lys-177 lines the substrate pocket. Lys-201, Asp-203, and Glu-204 together coordinate Mg(2+). Residue Lys-201 is modified to N6-carboxylysine. Residue Ser-208 is modified to Phosphoserine. The active-site Proton acceptor is the His-294. Residues Arg-295 and His-327 each contribute to the substrate site. Thr-330 is subject to Phosphothreonine. Ser-379 contacts substrate.

It belongs to the RuBisCO large chain family. Type I subfamily. As to quaternary structure, heterohexadecamer of 8 large chains and 8 small chains; disulfide-linked. The disulfide link is formed within the large subunit homodimers. The cofactor is Mg(2+). The disulfide bond which can form in the large chain dimeric partners within the hexadecamer appears to be associated with oxidative stress and protein turnover.

It is found in the plastid. Its subcellular location is the chloroplast. It catalyses the reaction 2 (2R)-3-phosphoglycerate + 2 H(+) = D-ribulose 1,5-bisphosphate + CO2 + H2O. The catalysed reaction is D-ribulose 1,5-bisphosphate + O2 = 2-phosphoglycolate + (2R)-3-phosphoglycerate + 2 H(+). In terms of biological role, ruBisCO catalyzes two reactions: the carboxylation of D-ribulose 1,5-bisphosphate, the primary event in carbon dioxide fixation, as well as the oxidative fragmentation of the pentose substrate in the photorespiration process. Both reactions occur simultaneously and in competition at the same active site. This Nasturtium officinale (Watercress) protein is Ribulose bisphosphate carboxylase large chain.